A 260-amino-acid polypeptide reads, in one-letter code: Thiazole synthase (260 aa).

Lys100 (schiff-base intermediate with DXP) is an active-site residue. Residues Gly162, 188 to 189 (AG), and 210 to 211 (NT) contribute to the 1-deoxy-D-xylulose 5-phosphate site.

Belongs to the ThiG family. Homotetramer. Forms heterodimers with either ThiH or ThiS.

The protein localises to the cytoplasm. The enzyme catalyses [ThiS sulfur-carrier protein]-C-terminal-Gly-aminoethanethioate + 2-iminoacetate + 1-deoxy-D-xylulose 5-phosphate = [ThiS sulfur-carrier protein]-C-terminal Gly-Gly + 2-[(2R,5Z)-2-carboxy-4-methylthiazol-5(2H)-ylidene]ethyl phosphate + 2 H2O + H(+). Its pathway is cofactor biosynthesis; thiamine diphosphate biosynthesis. Catalyzes the rearrangement of 1-deoxy-D-xylulose 5-phosphate (DXP) to produce the thiazole phosphate moiety of thiamine. Sulfur is provided by the thiocarboxylate moiety of the carrier protein ThiS. In vitro, sulfur can be provided by H(2)S. The polypeptide is Thiazole synthase (Wolinella succinogenes (strain ATCC 29543 / DSM 1740 / CCUG 13145 / JCM 31913 / LMG 7466 / NCTC 11488 / FDC 602W) (Vibrio succinogenes)).